The sequence spans 342 residues: MPSPLSLCRYLPRELSPSVDSRSCSIPLVAPRKAGKLFLGTTPPRAPGLPRRLAWFSIDWEQVCLMHRLGSGGFGSVYKATYHGVPVAIKQVNKCTKDLRASQRSFWAELNIARLRHDNIVRVVAASTRTPEDSNSLGTIIMEFGGNVTLHQVIYGATRSPEPLSCREQLSLGKCLKYSLDVVNGLLFLHSQSILHLDLKPANILISEQDVCKISDFGCSQKLQDLRCRQSPHHIGGTYTHQAPEILKGEIATPKADIYSFGITLWQMTTREVPYSGEPQYVQYAVVAYNLRPSLTGAVFTASLTRKTLQNIIQNCWEARALQRPGAELLQRDLKAFRGALG.

In terms of domain architecture, Protein kinase spans 63–338 (VCLMHRLGSG…LLQRDLKAFR (276 aa)). ATP-binding positions include 69-77 (LGSGGFGSV) and Lys90. Asp198 serves as the catalytic Proton acceptor.

It belongs to the protein kinase superfamily. Ser/Thr protein kinase family.

The catalysed reaction is L-seryl-[protein] + ATP = O-phospho-L-seryl-[protein] + ADP + H(+). It carries out the reaction L-threonyl-[protein] + ATP = O-phospho-L-threonyl-[protein] + ADP + H(+). This chain is Serine/threonine-protein kinase-transforming protein mos (V-MOS), found in Myeloproliferative sarcoma virus (isolate ts159).